A 717-amino-acid polypeptide reads, in one-letter code: Ferric reduction oxidase 3, mitochondrial (717 aa).

The N-terminal 23 residues, 1 to 23 (MAARGRLVVARGNRSFSSIIRKY), are a transit peptide targeting the mitochondrion. 6 helical membrane-spanning segments follow: residues 40–59 (LLTM…MPTS), 86–104 (LLVY…SIYL), 140–163 (LGIV…WSLA), 232–255 (YHIW…CIYW), 306–330 (THYL…LISF), and 353–373 (LVSA…KNPM). Residues 198–317 (GLTGNICLGF…YLYMVFMLFF (120 aa)) form the Ferric oxidoreductase domain. The heme site is built by H233, H247, H307, and H320. The 106-residue stretch at 346 to 451 (QSRNNVKLVS…EGPYGPASTD (106 aa)) folds into the FAD-binding FR-type domain. An FAD-binding site is contributed by 395-398 (HPFT). 443–446 (GPYG) is an NAD(+) binding site. 2 helical membrane passes run 564–586 (WLWL…AIIS) and 606–627 (SLIY…AMLC).

Belongs to the ferric reductase (FRE) family. The cofactor is FAD. Expressed in root steele. Detected in shoots, leaves, stems, siliques, flowers and cotyledons.

It localises to the mitochondrion membrane. It catalyses the reaction 2 a Fe(II)-siderophore + NAD(+) + H(+) = 2 a Fe(III)-siderophore + NADH. Ferric chelate reductase involved in iron reduction in roots. May participate in the transport of electrons to a Fe(3+) ion via FAD and heme intermediates. The polypeptide is Ferric reduction oxidase 3, mitochondrial (FRO3) (Arabidopsis thaliana (Mouse-ear cress)).